Here is a 408-residue protein sequence, read N- to C-terminus: Aminomethyltransferase, mitochondrial (408 aa).

The transit peptide at 1-30 (MRGGLWQLGQSITRRLANGGDKKAVARRCF) directs the protein to the mitochondrion. The substrate site is built by glutamate 235, arginine 266, and tyrosine 404.

It belongs to the GcvT family. As to quaternary structure, the glycine cleavage system is composed of four proteins: P, T, L and H.

It is found in the mitochondrion. The enzyme catalyses N(6)-[(R)-S(8)-aminomethyldihydrolipoyl]-L-lysyl-[protein] + (6S)-5,6,7,8-tetrahydrofolate = N(6)-[(R)-dihydrolipoyl]-L-lysyl-[protein] + (6R)-5,10-methylene-5,6,7,8-tetrahydrofolate + NH4(+). In terms of biological role, the glycine cleavage system catalyzes the degradation of glycine. This chain is Aminomethyltransferase, mitochondrial (GDCST), found in Pisum sativum (Garden pea).